Reading from the N-terminus, the 83-residue chain is Hainantoxin-III (83 aa).

A signal peptide spans 1–21 (MKASMFLALAGLVLLFVVGYA). A propeptide spanning residues 22 to 48 (SESEEKEFPRELLSKIFALDDFKGEER) is cleaved from the precursor. 3 cysteine pairs are disulfide-bonded: C50/C65, C57/C70, and C64/C77. L81 carries the leucine amide modification.

The protein belongs to the neurotoxin 10 (Hwtx-1) family. 15 (Hntx-3) subfamily. In terms of assembly, monomer. Expressed by the venom gland.

The protein resides in the secreted. Functionally, selective antagonist of neuronal tetrodotoxin (TTX)-sensitive voltage-gated sodium channels (IC(50)=1270 nM on Nav1.1/SCN1A, 270 nM on Nav1.2/SCN2A, 491 nM on Nav1.3/SCN3A and 232 nM on Nav1.7/SCN9A). This toxin suppress Nav1.7 current amplitude without significantly altering the activation, inactivation, and repriming kinetics. Short extreme depolarizations partially activate the toxin-bound channel, indicating voltage-dependent inhibition of this toxin. This toxin increases the deactivation of the Nav1.7 current after extreme depolarizations. The toxin-Nav1.7 complex is gradually dissociated upon prolonged strong depolarizations in a voltage-dependent manner, and the unbound toxin rebinds to Nav1.7 after a long repolarization. Moreover, analysis of chimeric channels showed that the DIIS3-S4 linker is critical for toxin binding to Nav1.7. These data are consistent with this toxin interacting with Nav1.7 site 4 and trapping the domain II voltage sensor in the closed state. In Cyriopagopus hainanus (Chinese bird spider), this protein is Hainantoxin-III.